The primary structure comprises 85 residues: Probable oxaloacetate decarboxylase gamma chain (85 aa).

A helical membrane pass occupies residues 11–33 (AAALMVTGMGVVFIFLTILIFLV).

The protein belongs to the OadG family. In terms of assembly, heterotrimer of an alpha, a beta and a gamma subunit. It depends on Na(+) as a cofactor.

The protein resides in the cell membrane. The enzyme catalyses oxaloacetate + 2 Na(+)(in) + H(+) = pyruvate + 2 Na(+)(out) + CO2. In terms of biological role, catalyzes the decarboxylation of oxaloacetate coupled to Na(+) translocation. This Vibrio vulnificus (strain CMCP6) protein is Probable oxaloacetate decarboxylase gamma chain.